A 1455-amino-acid chain; its full sequence is Membrane-associated guanylate kinase, WW and PDZ domain-containing protein 2 (1455 aa).

In terms of domain architecture, PDZ 1 spans 17 to 101; sequence ESVIGRNPEG…PLRLKCVKQG (85 aa). In terms of domain architecture, Guanylate kinase-like spans 109 to 283; it reads RHYLNLRFQK…APVYSQPEEL (175 aa). The segment at 205 to 306 is disordered; that stretch reads PGATPSAEGK…DNEEPDPLPD (102 aa). Residues 241–252 are compositionally biased toward low complexity; sequence VVNGNGVVVTPE. Positions 281 to 296 are enriched in basic and acidic residues; it reads EELKEQMDDTKPTKPE. WW domains follow at residues 302–335 and 348–381; these read DPLP…DPRL and NELP…NPVL. Residues 302-381 form an interaction with DDN region; the sequence is DPLPDNWEMA…RRTQFENPVL (80 aa). At tyrosine 362 the chain carries Phosphotyrosine. 2 consecutive PDZ domains span residues 426–510 and 605–683; these read STTL…CRGY and TLTI…HRGG. Phosphoserine is present on serine 686. Residues 778 to 860 enclose the PDZ 4 domain; sequence DVHLRRMESG…NGQVNLTVRR (83 aa). Residue tyrosine 827 is modified to Phosphotyrosine. The disordered stretch occupies residues 869–913; it reads CPENGRSPGSVSTHHSSPRSDYATYTNSNHAAPSSNASPPEGFAS. Phosphoserine occurs at positions 884 and 885. The segment covering 895–908 has biased composition (low complexity); that stretch reads NSNHAAPSSNASPP. The PDZ 5 domain occupies 920-1010; sequence DVVIHRKENE…SVTLRIIPQE (91 aa). Over residues 1011 to 1040 the composition is skewed to polar residues; the sequence is ELNSPTSAPSSEKQSPMAQQSPLAQQSPLA. The tract at residues 1011–1136 is disordered; sequence ELNSPTSAPS…PDTRQYPLSD (126 aa). At serine 1014 the chain carries Phosphoserine. The segment covering 1067-1083 has biased composition (basic and acidic residues); the sequence is NSYRSEVKARQDVKPDI. Residues 1147-1229 enclose the PDZ 6 domain; sequence TVDMEKGAKG…RVRLLLKRGT (83 aa). A disordered region spans residues 1231–1455; it reads QVPEYDEPAP…LKPGASAASR (225 aa). Residues 1238-1249 are compositionally biased toward low complexity; it reads PAPWSSPAAAAP. The segment covering 1287 to 1299 has biased composition (basic and acidic residues); the sequence is DIKREHDVRKPKE. Composition is skewed to low complexity over residues 1346-1363, 1399-1412, and 1422-1433; these read EARA…AARA, ALEA…RAGP, and APARKAAVAPGP.

Belongs to the MAGUK family. In terms of assembly, interacts (via its WW domains) with DRPLA. Interacts (via its second PDZ domain) with PTEN (via unphosphorylated C-terminus); this interaction diminishes the degradation rate of PTEN. Interacts (via guanylate kinase domain) with DLGAP1. Interacts (via the PDZ domains) with GRIN2A, GRID2 and NLGN1. Interacts with CTNND2, CTNNB1, MAGUIN-1, ACVR2A, SMAD2 and SMAD3. Part of a complex consisting of MAGI2/ARIP1, ACVR2A, ACVR1B and SMAD3. May interact with HTR2A. Interacts with IGSF9, RAPGEF2 and HTR4. Identified in a complex with ACTN4, CASK, IQGAP1, NPHS1, SPTAN1 and SPTBN1. Found in a complex, at least composed of KIDINS220, MAGI2, NTRK1 and RAPGEF2; the complex is mainly formed at late endosomes in a NGF-dependent manner. Interacts with RAPGEF2; the interaction occurs before or after nerve growth factor (NGF) stimulation. Interacts (via PDZ domain) with KIDINS220 (via C-terminal domain). Interacts with DDN. Interacts with DLL1. Found in a complex with IGSF9B and NLGN2; the interaction with IGSF9B is mediated via the PDZ 5 and PDZ 6 domains, while the interaction with NLGN2 is mediated via the WW1, WW2 and PDZ2 domains. Interacts (via PDZ 6 domain) with USH1G (via SAM domain); the interaction is triggered by phosphorylation of USH1G by CK2 and negatively regulates MAGI2-mediated endocytosis. Specifically expressed in brain.

Its subcellular location is the cytoplasm. It localises to the late endosome. The protein resides in the synapse. It is found in the synaptosome. The protein localises to the cell membrane. Its subcellular location is the cytoskeleton. It localises to the microtubule organizing center. The protein resides in the centrosome. It is found in the cell projection. The protein localises to the cilium. Its subcellular location is the centriole. It localises to the photoreceptor inner segment. The protein resides in the photoreceptor outer segment. Seems to act as a scaffold molecule at synaptic junctions by assembling neurotransmitter receptors and cell adhesion proteins. Plays a role in nerve growth factor (NGF)-induced recruitment of RAPGEF2 to late endosomes and neurite outgrowth. May play a role in regulating activin-mediated signaling in neuronal cells. Enhances the ability of PTEN to suppress AKT1 activation. Plays a role in receptor-mediated clathrin-dependent endocytosis which is required for ciliogenesis. The polypeptide is Membrane-associated guanylate kinase, WW and PDZ domain-containing protein 2 (MAGI2) (Homo sapiens (Human)).